A 250-amino-acid polypeptide reads, in one-letter code: Electron transport regulator A (250 aa).

Residues Lys-164–His-237 enclose the HTH crp-type domain. The segment at residues Arg-197–Gly-216 is a DNA-binding region (H-T-H motif).

As to quaternary structure, monomer.

Its function is as follows. Regulates anaerobic growth on fumarate, nitrite, Fe(3+), TMAO, DMSO, thiosulfate and sulfite, but not on nitrate nor Mn(4+). The polypeptide is Electron transport regulator A (etrA) (Shewanella oneidensis (strain ATCC 700550 / JCM 31522 / CIP 106686 / LMG 19005 / NCIMB 14063 / MR-1)).